Consider the following 1235-residue polypeptide: Myosin-1 (1235 aa).

Positions 1 to 34 (MGITKRSKDKAARAERSAGGDKSSSAKPKKATFD) are disordered. Over residues 9–19 (DKAARAERSAG) the composition is skewed to basic and acidic residues. One can recognise a Myosin motor domain in the interval 41 to 715 (IGVSDLTLLS…TLFALEHMRD (675 aa)). An ATP-binding site is contributed by 134–141 (GESGAGKT). Residues 405–487 (SIGILDIYGF…PGIFSAMKDA (83 aa)) form an actin-binding region. 2 IQ domains span residues 719 to 739 (HNMA…RAEA) and 740 to 765 (AIRI…EGHK). The TH1 domain occupies 773-962 (RRRMSILGSR…TVHTQPGEPP (190 aa)). Disordered stretches follow at residues 949–1076 (YKSS…AAKP) and 1135–1235 (APPV…EDDW). The segment covering 982–1046 (KGKLIKPGGP…PGAAATPAAA (65 aa)) has biased composition (low complexity). The span at 1050 to 1062 (PSHTRQQSSTSTV) shows a compositional bias: polar residues. Over residues 1063–1073 (RPPPPPPPAPA) the composition is skewed to pro residues. In terms of domain architecture, SH3 spans 1075-1134 (KPKIMAKVLYDFAGTRENELSIKAGDMIEIVQKENNGWWLAKTPEGQAWVPAAYVEEQAP). Residues 1135–1150 (APPVVAPRPPPPPPPA) show a composition bias toward pro residues. The segment covering 1180 to 1210 (SLQNRDSGMSLNGANGSGSDASRSSTPTPSI) has biased composition (polar residues).

This sequence belongs to the TRAFAC class myosin-kinesin ATPase superfamily. Myosin family.

The protein localises to the cytoplasm. It is found in the cytoskeleton. Its subcellular location is the actin patch. Type-I myosin implicated in the organization of the actin cytoskeleton. Required for proper actin cytoskeleton polarization. At the cell cortex, assembles in patch-like structures together with proteins from the actin-polymerizing machinery and promotes actin assembly. Functions as actin nucleation-promoting factor (NPF) for the Arp2/3 complex. The chain is Myosin-1 (myo-1) from Neurospora crassa (strain ATCC 24698 / 74-OR23-1A / CBS 708.71 / DSM 1257 / FGSC 987).